The following is a 71-amino-acid chain: Beta-defensin 10 (71 aa).

A signal peptide spans 1-23 (MKTLCSLLLIGCLLFSYDTPVVG). 3 disulfides stabilise this stretch: Cys37/Cys66, Cys44/Cys59, and Cys49/Cys67.

The protein belongs to the beta-defensin family.

The protein resides in the secreted. Has antibacterial activity. In Rattus norvegicus (Rat), this protein is Beta-defensin 10 (Defb10).